The sequence spans 519 residues: GATA zinc finger domain-containing protein 8 (519 aa).

Disordered stretches follow at residues 25 to 182 (YSTG…SSSG), 198 to 249 (SNIN…SNNT), 273 to 359 (SNNM…NNKQ), and 431 to 453 (DERQ…KRRE). The span at 37-156 (TNNSQNKTNN…SSSITSPSSN (120 aa)) shows a compositional bias: low complexity. Polar residues predominate over residues 172–182 (SPNNKQVSSSG). Low complexity predominate over residues 273–357 (SNNMNINNQH…SNINNNNNNN (85 aa)). The stretch at 429 to 461 (KTDERQQKKRMESDKNAEKREKRREASRLLNNV) forms a coiled coil. A GATA-type zinc finger spans residues 462–487 (CRNCKTTETPEWRKGPDGTKSLCNAC).

The sequence is that of GATA zinc finger domain-containing protein 8 (gtaH) from Dictyostelium discoideum (Social amoeba).